Consider the following 737-residue polypeptide: Exostosin-1c (737 aa).

Residues 1-6 (MQARKK) are Cytoplasmic-facing. A helical; Signal-anchor for type II membrane protein membrane pass occupies residues 7–27 (YVLLGLCTCCWILLYYWAGLQ). The Lumenal segment spans residues 28–737 (ERLLGLITHR…RKRYKDLERV (710 aa)). Residues N194 and N322 are each glycosylated (N-linked (GlcNAc...) asparagine). UDP-N-acetyl-alpha-D-glucosamine is bound by residues R432, R540, D556, E557, D558, E644, D645, and R692. D558 is a binding site for Mn(2+). A disulfide bridge connects residues C643 and C695. D645 is a catalytic residue.

Belongs to the glycosyltransferase 47 family. It depends on Mn(2+) as a cofactor.

It localises to the endoplasmic reticulum membrane. The enzyme catalyses 3-O-{[(1-&gt;4)-beta-D-GlcA-(1-&gt;4)-alpha-D-GlcNAc](n)-(1-&gt;4)-beta-D-GlcA-(1-&gt;3)-beta-D-Gal-(1-&gt;3)-beta-D-Gal-(1-&gt;4)-beta-D-Xyl}-L-seryl-[protein] + UDP-N-acetyl-alpha-D-glucosamine = 3-O-{alpha-D-GlcNAc-[(1-&gt;4)-beta-D-GlcA-(1-&gt;4)-alpha-D-GlcNAc](n)-(1-&gt;4)-beta-D-GlcA-(1-&gt;3)-beta-D-Gal-(1-&gt;3)-beta-D-Gal-(1-&gt;4)-beta-D-Xyl}-L-seryl-[protein] + UDP + H(+). The catalysed reaction is 3-O-{alpha-D-GlcNAc-[(1-&gt;4)-beta-D-GlcA-(1-&gt;4)-alpha-D-GlcNAc](n)-(1-&gt;4)-beta-D-GlcA-(1-&gt;3)-beta-D-Gal-(1-&gt;3)-beta-D-Gal-(1-&gt;4)-beta-D-Xyl}-L-seryl-[protein] + UDP-alpha-D-glucuronate = 3-O-{[(1-&gt;4)-beta-D-GlcA-(1-&gt;4)-alpha-D-GlcNAc](n+1)-(1-&gt;4)-beta-D-GlcA-(1-&gt;3)-beta-D-Gal-(1-&gt;3)-beta-D-Gal-(1-&gt;4)-beta-D-Xyl}-L-seryl-[protein] + UDP + H(+). It participates in protein modification; protein glycosylation. In terms of biological role, glycosyltransferase required for the biosynthesis of heparan-sulfate. The sequence is that of Exostosin-1c (ext1c) from Danio rerio (Zebrafish).